A 388-amino-acid chain; its full sequence is DNA primase small subunit PriS (388 aa).

Active-site residues include aspartate 100, aspartate 102, and aspartate 288.

Belongs to the eukaryotic-type primase small subunit family. As to quaternary structure, heterodimer of a small subunit (PriS) and a large subunit (PriL). Mg(2+) serves as cofactor. It depends on Mn(2+) as a cofactor.

Catalytic subunit of DNA primase, an RNA polymerase that catalyzes the synthesis of short RNA molecules used as primers for DNA polymerase during DNA replication. The small subunit contains the primase catalytic core and has DNA synthesis activity on its own. Binding to the large subunit stabilizes and modulates the activity, increasing the rate of DNA synthesis while decreasing the length of the DNA fragments, and conferring RNA synthesis capability. The DNA polymerase activity may enable DNA primase to also catalyze primer extension after primer synthesis. May also play a role in DNA repair. In Methanospirillum hungatei JF-1 (strain ATCC 27890 / DSM 864 / NBRC 100397 / JF-1), this protein is DNA primase small subunit PriS.